A 362-amino-acid chain; its full sequence is Phospho-N-acetylmuramoyl-pentapeptide-transferase (362 aa).

10 consecutive transmembrane segments (helical) span residues 21 to 41 (YITFRAGGACLTALVVSFLLG), 75 to 95 (TMGGFLILIALTVSTLLWADL), 100 to 120 (VWAVLMITIGYGALGFADDFL), 136 to 156 (LVVQAVLGLGAAVWITQLMPG), 170 to 190 (LMIPFGPLFPLVAMFVMMGAS), 201 to 221 (GLAIVPTIIAAGVFTLIAYLV), 225 to 245 (IFSHYLEINFVPGTGELAVFC), 247 to 267 (ALIGAGMGFLWFNAPPAAVFM), 290 to 310 (IVLAITGGLFVVETVSVIVQV), and 339 to 359 (TVVIRFWIVAMILALLGLATL).

The protein belongs to the glycosyltransferase 4 family. MraY subfamily. Mg(2+) is required as a cofactor.

The protein resides in the cell inner membrane. It catalyses the reaction UDP-N-acetyl-alpha-D-muramoyl-L-alanyl-gamma-D-glutamyl-meso-2,6-diaminopimeloyl-D-alanyl-D-alanine + di-trans,octa-cis-undecaprenyl phosphate = di-trans,octa-cis-undecaprenyl diphospho-N-acetyl-alpha-D-muramoyl-L-alanyl-D-glutamyl-meso-2,6-diaminopimeloyl-D-alanyl-D-alanine + UMP. The protein operates within cell wall biogenesis; peptidoglycan biosynthesis. Catalyzes the initial step of the lipid cycle reactions in the biosynthesis of the cell wall peptidoglycan: transfers peptidoglycan precursor phospho-MurNAc-pentapeptide from UDP-MurNAc-pentapeptide onto the lipid carrier undecaprenyl phosphate, yielding undecaprenyl-pyrophosphoryl-MurNAc-pentapeptide, known as lipid I. This Acidiphilium cryptum (strain JF-5) protein is Phospho-N-acetylmuramoyl-pentapeptide-transferase.